Reading from the N-terminus, the 348-residue chain is Ion-translocating oxidoreductase complex subunit D (348 aa).

3 helical membrane passes run 20-39 (LMKWVAICALPGLLAQTYFF), 72-91 (ALRDYSAVVTAWLLSVAIPP), and 120-140 (PFNPAMVAYVVLLISFPVQMT). An FMN phosphoryl threonine modification is found at Thr187. The next 5 helical transmembrane spans lie at 214–234 (LAGVGWEWVNLAYLIGGLVLI), 241–261 (WHIPVAFLGSLTLFSLMFLMF), 266–286 (TASPTIHLLSGATMLGAFFIA), 300–320 (LVFGALIGGLVFIIRSWGGFP), and 321–341 (DGVAFAVLLANMCVPLIDYYT).

It belongs to the NqrB/RnfD family. In terms of assembly, the complex is composed of six subunits: RnfA, RnfB, RnfC, RnfD, RnfE and RnfG. The cofactor is FMN.

It is found in the cell inner membrane. Functionally, part of a membrane-bound complex that couples electron transfer with translocation of ions across the membrane. The chain is Ion-translocating oxidoreductase complex subunit D from Vibrio atlanticus (strain LGP32) (Vibrio splendidus (strain Mel32)).